A 489-amino-acid polypeptide reads, in one-letter code: Betaine aldehyde dehydrogenase (489 aa).

K(+) is bound by residues Thr-26 and Asp-93. 150 to 152 (GAW) serves as a coordination point for NAD(+). Lys-162 acts as the Charge relay system in catalysis. 176–179 (KPSE) provides a ligand contact to NAD(+). Val-180 provides a ligand contact to K(+). An NAD(+)-binding site is contributed by 229–232 (GVET). Residue Leu-245 participates in K(+) binding. The active-site Proton acceptor is the Glu-251. Residues Gly-253, Cys-285, and Glu-386 each contribute to the NAD(+) site. The active-site Nucleophile is Cys-285. Cys-285 is modified (cysteine sulfenic acid (-SOH)). Lys-456 and Gly-459 together coordinate K(+). Residue Glu-463 is the Charge relay system of the active site.

The protein belongs to the aldehyde dehydrogenase family. Dimer of dimers. The cofactor is K(+).

The enzyme catalyses betaine aldehyde + NAD(+) + H2O = glycine betaine + NADH + 2 H(+). It functions in the pathway amine and polyamine biosynthesis; betaine biosynthesis via choline pathway; betaine from betaine aldehyde: step 1/1. Involved in the biosynthesis of the osmoprotectant glycine betaine. Catalyzes the irreversible oxidation of betaine aldehyde to the corresponding acid. The protein is Betaine aldehyde dehydrogenase of Burkholderia orbicola (strain AU 1054).